Consider the following 390-residue polypeptide: L-seryl-tRNA(Sec) selenium transferase (390 aa).

Lys225 carries the N6-(pyridoxal phosphate)lysine modification.

This sequence belongs to the SelA family. It depends on pyridoxal 5'-phosphate as a cofactor.

The protein resides in the cytoplasm. It carries out the reaction L-seryl-tRNA(Sec) + selenophosphate + H(+) = L-selenocysteinyl-tRNA(Sec) + phosphate. Its pathway is aminoacyl-tRNA biosynthesis; selenocysteinyl-tRNA(Sec) biosynthesis; selenocysteinyl-tRNA(Sec) from L-seryl-tRNA(Sec) (bacterial route): step 1/1. Functionally, converts seryl-tRNA(Sec) to selenocysteinyl-tRNA(Sec) required for selenoprotein biosynthesis. In Helicobacter pylori (strain P12), this protein is L-seryl-tRNA(Sec) selenium transferase.